Consider the following 231-residue polypeptide: Regulatory protein VanR (231 aa).

Residues 4 to 117 (KILIVDDEHE…ELIARVKAQL (114 aa)) form the Response regulatory domain. 4-aspartylphosphate is present on Asp53. Residues 131–231 (ENVIVHSGLV…VWGVGYKIEK (101 aa)) constitute a DNA-binding region (ompR/PhoB-type).

As to quaternary structure, monomer. Phosphorylated by VanS. Dephosphorylated by VanS. Can be phosphorylated nonenzymatically by acetyl-phosphate.

The protein localises to the cytoplasm. Member of the two-component regulatory system VanS/VanR. Binds to the promoter regions of target genes, including vanH and vanR; phosphorylation of VanR increases binding affinity to the vanH and vanR promoters significantly. DNA binding may be inhibited by the cognate sensor protein, VanS. Activates the transcription of vanH, vanA and vanX in response to vancomycin which results in vancomycin resistance. Involved in conferring vancomycin resistance. The chain is Regulatory protein VanR (vanR) from Enterococcus faecium (Streptococcus faecium).